An 876-amino-acid polypeptide reads, in one-letter code: Ergothioneine biosynthesis protein 1 (876 aa).

Residues 36–350 (IIDIRRVAVE…TYGNEYGLHL (315 aa)) form an L-histidine N(alpha)-methyltransferase region. An L-histidine-binding site is contributed by tyrosine 88. Positions 119, 125, and 146 each coordinate S-adenosyl-L-methionine. L-histidine contacts are provided by residues asparagine 202, tyrosine 242, and 315-317 (EQS). The tract at residues 378-874 (ALWATWDVVT…YAWVGARVVR (497 aa)) is hercynylcysteine S-oxide synthase. Fe cation contacts are provided by histidine 413, histidine 506, and histidine 510. Disordered regions lie at residues 631 to 650 (GTTN…QQLP) and 732 to 761 (TNNG…SNTT). The span at 744–758 (PSSETPAESSSPSDS) shows a compositional bias: low complexity.

It in the N-terminal section; belongs to the methyltransferase superfamily. EgtD family. In the C-terminal section; belongs to the EgtB family. The cofactor is Fe(2+).

The protein resides in the cytoplasm. It is found in the nucleus. The enzyme catalyses L-histidine + 3 S-adenosyl-L-methionine = hercynine + 3 S-adenosyl-L-homocysteine + 3 H(+). It carries out the reaction hercynine + L-cysteine + O2 = S-(hercyn-2-yl)-L-cysteine S-oxide + H2O. It participates in amino-acid biosynthesis; ergothioneine biosynthesis. Functionally, catalyzes the SAM-dependent triple methylation of the alpha-amino group of histidine to form hercynine and subsequent conjugation with cysteine and oxygen to form hercynylcysteine sulfoxide, the first two steps in the biosynthesis pathway of ergothioneine. Ergothioneine is an unusual thio-histidine betaine amino acid that acts as an antioxidant against peroxide in conidia and contributes to conidial longevity. This is Ergothioneine biosynthesis protein 1 from Neurospora crassa (strain ATCC 24698 / 74-OR23-1A / CBS 708.71 / DSM 1257 / FGSC 987).